We begin with the raw amino-acid sequence, 323 residues long: Protein translocase subunit SecF (323 aa).

6 consecutive transmembrane segments (helical) span residues 19-39 (GVIV…FKGF), 138-158 (ILSL…RYEW), 162-182 (LASV…VIVF), 189-209 (EVIA…IIIF), 244-264 (LTVF…IIGF), and 269-289 (LIGT…VALL).

Belongs to the SecD/SecF family. SecF subfamily. Forms a complex with SecD. Part of the essential Sec protein translocation apparatus which comprises SecA, SecYEG and auxiliary proteins SecDF-YajC and YidC.

The protein localises to the cell inner membrane. In terms of biological role, part of the Sec protein translocase complex. Interacts with the SecYEG preprotein conducting channel. SecDF uses the proton motive force (PMF) to complete protein translocation after the ATP-dependent function of SecA. The sequence is that of Protein translocase subunit SecF from Helicobacter pylori (strain ATCC 700392 / 26695) (Campylobacter pylori).